The chain runs to 192 residues: Glycerol-3-phosphate acyltransferase (192 aa).

5 helical membrane-spanning segments follow: residues 4-24 (FAII…DVVI), 48-68 (LVLV…WVGY), 74-94 (YFEL…PIFF), 101-121 (GVAT…GSML), and 125-145 (LLIF…ALIL).

The protein belongs to the PlsY family. In terms of assembly, probably interacts with PlsX.

Its subcellular location is the cell inner membrane. It carries out the reaction an acyl phosphate + sn-glycerol 3-phosphate = a 1-acyl-sn-glycero-3-phosphate + phosphate. It participates in lipid metabolism; phospholipid metabolism. Its function is as follows. Catalyzes the transfer of an acyl group from acyl-phosphate (acyl-PO(4)) to glycerol-3-phosphate (G3P) to form lysophosphatidic acid (LPA). This enzyme utilizes acyl-phosphate as fatty acyl donor, but not acyl-CoA or acyl-ACP. This Histophilus somni (strain 129Pt) (Haemophilus somnus) protein is Glycerol-3-phosphate acyltransferase.